The primary structure comprises 328 residues: MPNYINYPSWLHPEVIQGIPITWYSLSYILIILISYKFIWYQIQSDNVDIKKEDYEIFMFSLVLGAILGGRLASTLVYDKSGIYYSNPWLILLPFDQHWNFTGFRGMAIHGGFLGAIIAPLITINTNLKNTNVQKYFLKLTDYGSIAFSSGYILGRLANFANAELYGRVMKGGIIFPNAEPFDTNIPGVKEFASSVGLEISPHDLLINLPRIPSQLIEGFFEGPVTFLLLWFLFKKIKKYDGFIFGVYVMLYAFFRFFIEYLREPDKELGFIITYKPITSLSEFSFLNISMGQILSLTLMLSGLIWIIVTKKIADKKIKNNTNLAYKN.

The next 3 helical transmembrane spans lie at 15 to 35 (VIQG…ILIS), 57 to 77 (IFMF…STLV), and 106 to 126 (GMAI…TINT). Arginine 156 is an a 1,2-diacyl-sn-glycero-3-phospho-(1'-sn-glycerol) binding site. Helical transmembrane passes span 242–262 (GFIF…IEYL) and 289–309 (ISMG…WIIV).

This sequence belongs to the Lgt family.

It is found in the cell inner membrane. The enzyme catalyses L-cysteinyl-[prolipoprotein] + a 1,2-diacyl-sn-glycero-3-phospho-(1'-sn-glycerol) = an S-1,2-diacyl-sn-glyceryl-L-cysteinyl-[prolipoprotein] + sn-glycerol 1-phosphate + H(+). It participates in protein modification; lipoprotein biosynthesis (diacylglyceryl transfer). Functionally, catalyzes the transfer of the diacylglyceryl group from phosphatidylglycerol to the sulfhydryl group of the N-terminal cysteine of a prolipoprotein, the first step in the formation of mature lipoproteins. The polypeptide is Phosphatidylglycerol--prolipoprotein diacylglyceryl transferase (Borreliella burgdorferi (strain ATCC 35210 / DSM 4680 / CIP 102532 / B31) (Borrelia burgdorferi)).